Here is a 183-residue protein sequence, read N- to C-terminus: Adenine phosphoribosyltransferase (183 aa).

It belongs to the purine/pyrimidine phosphoribosyltransferase family. In terms of assembly, homodimer.

It localises to the cytoplasm. It catalyses the reaction AMP + diphosphate = 5-phospho-alpha-D-ribose 1-diphosphate + adenine. Its pathway is purine metabolism; AMP biosynthesis via salvage pathway; AMP from adenine: step 1/1. Catalyzes a salvage reaction resulting in the formation of AMP, that is energically less costly than de novo synthesis. This is Adenine phosphoribosyltransferase from Shewanella halifaxensis (strain HAW-EB4).